Reading from the N-terminus, the 303-residue chain is Ribosomal protein uL3 glutamine methyltransferase (303 aa).

Belongs to the protein N5-glutamine methyltransferase family. PrmB subfamily.

The enzyme catalyses L-glutaminyl-[ribosomal protein uL3] + S-adenosyl-L-methionine = N(5)-methyl-L-glutaminyl-[ribosomal protein uL3] + S-adenosyl-L-homocysteine + H(+). Its function is as follows. Methylates large ribosomal subunit protein uL3 on a specific glutamine residue. The sequence is that of Ribosomal protein uL3 glutamine methyltransferase from Neisseria meningitidis serogroup B (strain ATCC BAA-335 / MC58).